The sequence spans 421 residues: Medium-chain specific acyl-CoA dehydrogenase, mitochondrial (421 aa).

Residues Met1–Thr25 constitute a mitochondrion transit peptide. An N6-acetyllysine modification is found at Lys79. An FAD-binding site is contributed by Tyr158 to Ser167. Residue Ser167 participates in octanoyl-CoA binding. Lys179 carries the N6-succinyllysine modification. Trp191–Thr193 contacts FAD. Position 212 is an N6-acetyllysine; alternate (Lys212). An N6-succinyllysine; alternate modification is found at Lys212. Ser216 serves as a coordination point for octanoyl-CoA. N6-acetyllysine; alternate is present on residues Lys217, Lys259, and Lys271. 3 positions are modified to N6-succinyllysine; alternate: Lys217, Lys259, and Lys271. Octanoyl-CoA is bound at residue Asp278. An N6-acetyllysine modification is found at Lys279. Arg281 serves as a coordination point for octanoyl-CoA. Position 301 is an N6-acetyllysine (Lys301). Residues Arg306–Thr308 and His316–Gln317 contribute to the FAD site. Positions 349 and 351 each coordinate octanoyl-CoA. Thr351 is modified (phosphothreonine). Gln374–Gly378 is a binding site for FAD. Residue Glu401 coordinates octanoyl-CoA. The Proton acceptor role is filled by Glu401. Gly402–Gln405 is a binding site for FAD.

Belongs to the acyl-CoA dehydrogenase family. In terms of assembly, homotetramer. Interacts with the heterodimeric electron transfer flavoprotein ETF. The cofactor is FAD. In terms of processing, acetylated. Could occur at proximity of the cofactor-binding sites and reduce the catalytic activity. Could be deacetylated by SIRT3.

Its subcellular location is the mitochondrion matrix. The catalysed reaction is a medium-chain 2,3-saturated fatty acyl-CoA + oxidized [electron-transfer flavoprotein] + H(+) = a medium-chain (2E)-enoyl-CoA + reduced [electron-transfer flavoprotein]. The enzyme catalyses pentanoyl-CoA + oxidized [electron-transfer flavoprotein] + H(+) = (2E)-pentenoyl-CoA + reduced [electron-transfer flavoprotein]. It catalyses the reaction hexanoyl-CoA + oxidized [electron-transfer flavoprotein] + H(+) = (2E)-hexenoyl-CoA + reduced [electron-transfer flavoprotein]. It carries out the reaction octanoyl-CoA + oxidized [electron-transfer flavoprotein] + H(+) = (2E)-octenoyl-CoA + reduced [electron-transfer flavoprotein]. The catalysed reaction is decanoyl-CoA + oxidized [electron-transfer flavoprotein] + H(+) = (2E)-decenoyl-CoA + reduced [electron-transfer flavoprotein]. The enzyme catalyses dodecanoyl-CoA + oxidized [electron-transfer flavoprotein] + H(+) = (2E)-dodecenoyl-CoA + reduced [electron-transfer flavoprotein]. It catalyses the reaction tetradecanoyl-CoA + oxidized [electron-transfer flavoprotein] + H(+) = (2E)-tetradecenoyl-CoA + reduced [electron-transfer flavoprotein]. It carries out the reaction oxidized [electron-transfer flavoprotein] + hexadecanoyl-CoA + H(+) = (2E)-hexadecenoyl-CoA + reduced [electron-transfer flavoprotein]. The protein operates within lipid metabolism; mitochondrial fatty acid beta-oxidation. In terms of biological role, medium-chain specific acyl-CoA dehydrogenase is one of the acyl-CoA dehydrogenases that catalyze the first step of mitochondrial fatty acid beta-oxidation, an aerobic process breaking down fatty acids into acetyl-CoA and allowing the production of energy from fats. The first step of fatty acid beta-oxidation consists in the removal of one hydrogen from C-2 and C-3 of the straight-chain fatty acyl-CoA thioester, resulting in the formation of trans-2-enoyl-CoA. Electron transfer flavoprotein (ETF) is the electron acceptor that transfers electrons to the main mitochondrial respiratory chain via ETF-ubiquinone oxidoreductase (ETF dehydrogenase). Among the different mitochondrial acyl-CoA dehydrogenases, medium-chain specific acyl-CoA dehydrogenase acts specifically on acyl-CoAs with saturated 6 to 12 carbons long primary chains. The sequence is that of Medium-chain specific acyl-CoA dehydrogenase, mitochondrial from Sus scrofa (Pig).